The following is a 94-amino-acid chain: uncharacterized protein (94 aa).

In terms of tissue distribution, specifically expressed in retina and retinal pigment epithelium.

This is an uncharacterized protein from Homo sapiens (Human).